The sequence spans 286 residues: 4-hydroxybenzoate octaprenyltransferase (286 aa).

Helical transmembrane passes span 20–40, 43–63, 83–103, 135–155, 160–180, 209–229, and 234–254; these read IGIL…ADGM, PMIL…GCAI, LATG…LSLC, FFAM…PMAF, GTVP…VIAY, VAGI…AGIL, and IWFY…YTMI.

This sequence belongs to the UbiA prenyltransferase family. The cofactor is Mg(2+).

The protein resides in the cell inner membrane. The catalysed reaction is all-trans-octaprenyl diphosphate + 4-hydroxybenzoate = 4-hydroxy-3-(all-trans-octaprenyl)benzoate + diphosphate. It functions in the pathway cofactor biosynthesis; ubiquinone biosynthesis. Functionally, catalyzes the prenylation of para-hydroxybenzoate (PHB) with an all-trans polyprenyl group. Mediates the second step in the final reaction sequence of ubiquinone-8 (UQ-8) biosynthesis, which is the condensation of the polyisoprenoid side chain with PHB, generating the first membrane-bound Q intermediate 3-octaprenyl-4-hydroxybenzoate. The sequence is that of 4-hydroxybenzoate octaprenyltransferase from Nitrosomonas eutropha (strain DSM 101675 / C91 / Nm57).